A 678-amino-acid polypeptide reads, in one-letter code: DNA ligase (678 aa).

NAD(+) contacts are provided by residues 47–51 (DSDYD), 96–97 (SL), and Glu-122. Catalysis depends on Lys-124, which acts as the N6-AMP-lysine intermediate. Arg-145, Glu-182, Lys-300, and Lys-324 together coordinate NAD(+). Residues Cys-418, Cys-421, Cys-436, and Cys-442 each contribute to the Zn(2+) site. The BRCT domain occupies 602 to 678 (AYNESFTGKT…ILEDNLKDLL (77 aa)).

Belongs to the NAD-dependent DNA ligase family. LigA subfamily. Mg(2+) is required as a cofactor. The cofactor is Mn(2+).

The catalysed reaction is NAD(+) + (deoxyribonucleotide)n-3'-hydroxyl + 5'-phospho-(deoxyribonucleotide)m = (deoxyribonucleotide)n+m + AMP + beta-nicotinamide D-nucleotide.. Its function is as follows. DNA ligase that catalyzes the formation of phosphodiester linkages between 5'-phosphoryl and 3'-hydroxyl groups in double-stranded DNA using NAD as a coenzyme and as the energy source for the reaction. It is essential for DNA replication and repair of damaged DNA. This Francisella tularensis subsp. holarctica (strain FTNF002-00 / FTA) protein is DNA ligase.